The chain runs to 521 residues: Medium/long-chain-fatty-acid--[acyl-carrier-protein] ligase MbtM (521 aa).

Belongs to the ATP-dependent AMP-binding enzyme family.

The enzyme catalyses a long-chain fatty acid + holo-[ACP] + ATP = a long-chain fatty acyl-[ACP] + AMP + diphosphate. It catalyses the reaction a medium-chain fatty acid + holo-[ACP] + ATP = a medium-chain fatty acyl-[ACP] + AMP + diphosphate. The protein operates within siderophore biosynthesis; mycobactin biosynthesis. Functionally, activates lipidic moieties required for mycobactin biosynthesis. Converts medium- to long-chain aliphatic fatty acids into acyl adenylate, which is further transferred on to the phosphopantetheine arm of the carrier protein MbtL. This chain is Medium/long-chain-fatty-acid--[acyl-carrier-protein] ligase MbtM (mbtM), found in Mycobacterium tuberculosis (strain CDC 1551 / Oshkosh).